We begin with the raw amino-acid sequence, 126 residues long: Fluoride-specific ion channel FluC (126 aa).

A run of 4 helical transmembrane segments spans residues 4 to 24, 35 to 55, 68 to 88, and 103 to 123; these read SILAVGIGGALGSLFRWFLGI, LGTFAANVIAGYVIGVAVAGF, FVITGLMGGLSTFSTFSAEVV, and IVIHVGASLVMTILGIATVSL. G75 and S78 together coordinate Na(+).

This sequence belongs to the fluoride channel Fluc/FEX (TC 1.A.43) family.

It is found in the cell inner membrane. It catalyses the reaction fluoride(in) = fluoride(out). With respect to regulation, na(+) is not transported, but it plays an essential structural role and its presence is essential for fluoride channel function. Fluoride-specific ion channel. Important for reducing fluoride concentration in the cell, thus reducing its toxicity. This is Fluoride-specific ion channel FluC from Paraburkholderia xenovorans (strain LB400).